The following is a 76-amino-acid chain: Sec-independent protein translocase protein TatA (76 aa).

Residues 1-21 (MGGISITQLLIIVAIVVLLFG) form a helical membrane-spanning segment. Residues 45-76 (DDNKEKDAEFKSLSDDSETTAKTEKAKDKEQA) are disordered.

The protein belongs to the TatA/E family. In terms of assembly, the Tat system comprises two distinct complexes: a TatABC complex, containing multiple copies of TatA, TatB and TatC subunits, and a separate TatA complex, containing only TatA subunits. Substrates initially bind to the TatABC complex, which probably triggers association of the separate TatA complex to form the active translocon.

It is found in the cell inner membrane. In terms of biological role, part of the twin-arginine translocation (Tat) system that transports large folded proteins containing a characteristic twin-arginine motif in their signal peptide across membranes. TatA could form the protein-conducting channel of the Tat system. The protein is Sec-independent protein translocase protein TatA of Pasteurella multocida (strain Pm70).